Consider the following 492-residue polypeptide: Fascin-2 (492 aa).

The protein belongs to the fascin family. In terms of tissue distribution, expressed in the inner ear. Abundant in the utricle.

The protein localises to the cytoplasm. It is found in the cytoskeleton. The protein resides in the cell projection. It localises to the stereocilium. Acts as an actin bundling protein. May play a pivotal role in photoreceptor cell-specific events, such as disk morphogenesis. Important for maintaining functional hair-cell bundles in the inner ear. May stiffen the longer stereocilia of hair-cell bundles in the inner ear enabling better force transmission to tip links. The polypeptide is Fascin-2 (Fscn2) (Mus musculus (Mouse)).